Reading from the N-terminus, the 126-residue chain is Ribosome-binding factor A (126 aa).

The protein belongs to the RbfA family. In terms of assembly, monomer. Binds 30S ribosomal subunits, but not 50S ribosomal subunits or 70S ribosomes.

It is found in the cytoplasm. Its function is as follows. One of several proteins that assist in the late maturation steps of the functional core of the 30S ribosomal subunit. Associates with free 30S ribosomal subunits (but not with 30S subunits that are part of 70S ribosomes or polysomes). Required for efficient processing of 16S rRNA. May interact with the 5'-terminal helix region of 16S rRNA. The sequence is that of Ribosome-binding factor A from Thermosynechococcus vestitus (strain NIES-2133 / IAM M-273 / BP-1).